A 204-amino-acid chain; its full sequence is Carbon disulfide hydrolase (204 aa).

Residues C35, H88, and C91 each coordinate Zn(2+).

The protein belongs to the beta-class carbonic anhydrase family. In terms of assembly, forms a hexadecameric catenane homooligomer, through interactions of two interlocked octameric rings. Exists as both octamers and hexadecamers in solution. It depends on Zn(2+) as a cofactor.

The enzyme catalyses carbon disulfide + 2 H2O = 2 hydrogen sulfide + CO2 + 2 H(+). It participates in sulfur metabolism; hydrogen sulfide biosynthesis. Functionally, catalyzes the conversion of carbon disulfide into hydrogen sulfide and carbon dioxide, with carbonyl sulfide as an intermediate. Likely plays a key role in sulfur metabolism that allows Acidianus sp. A1-3 to grow on carbon disulfide as the main carbon and energy source. Does not show carbonic anhydrase activity (hydration of CO(2) to carbonate). In Acidianus sp. (strain A1-3), this protein is Carbon disulfide hydrolase.